The primary structure comprises 1033 residues: MSEVKIDSNSFHKRLSLIQKNLTSIQDKQSCLLLLVGASDDENTYKKTTVLQTWLLGYEFVHTGIYITQDKCVFITSEGKAKYLTNLTSKPTENSSSVEIWPRYKDAEKNKETFKKLIEELKKMSSREKPIGHIAKDQYRGKFIDEWNEVSADAGLSFSDCALLLSESMEIKDSEEFANTKIASKSSTVLMDAFANEMMVVVDEEKKTSNSDLSEKIEDKIDSNKWYTKSATGKKLLQSMKEFDPSLVDWCYSPIIQSGGEYDLKPSAQSTTKALVGDGVILASLGLRYKSYCSNVARTFFIDPTPAMETNYDFLLKLQNHVTSTLLRDGTVASQVYQGALDFIKSEKPDLVQHFTKNCGWLMGIEFRDSTFVLNSKNERKLQNGQIISLTLGFSNLTNDKASNPKLKQYSLILTDTFKVSESEPILLTTYPKARSETSFYFKDDEPTAVKSENGGDKKLKSEKNIKTEKNLAANEANSKILKSKLRHESSAADDSNNTEKIRQEIQSKLHEKRQHEGLARFSKADATDASDFKPVFKKYESYVRESQIPSNVRDLKIHVDYKNQTIILPICGRPVPFHINSFKNGSQNEEGDFTYLRLNFNSPGAGGNVSRRAELPYEDSPENSFLRSVTLRSRDHQRMVDVYKAIQDLKKDAVKREQEKKQMADVVSQANLVELKGSRVKKLDQVFIRPQPDTKKIGGVLQIHENGLRYQSSIRMDQKVDILFSNIKHLFFQSCKDELIVIIHCHLKNPIMIGKKKTHDVQFYREASDMAFDETGGRKRRYRYGDEDELQQEQEERRRKALLDKEFKAFAELISDSSSGMVDLDIPFRELGFSGVPFRSSVLCMPTRDCLIQLIDPPYLVVTLEEIEIAHLERVQFGLKNFDLVFVFKDFNKSVVHINTIPMELLEDVKSWLTDVDIPISEGQMNLNWATIMKTVQSDPYQFFADGGWSFLTGEGDSEEEDEEDEESEFEVSDPDPSDEDVESEAGSEDDYSSDASGSDASGGESEEEEEGEDWDEMERKAAREDKRLGAS.

Coiled coils occupy residues 103–128 and 467–517; these read RYKDAEKNKETFKKLIEELKKMSSRE and KTEK…RQHE. Residues 953 to 1033 form a disordered region; sequence LTGEGDSEEE…AREDKRLGAS (81 aa). A compositionally biased stretch (acidic residues) spans 957–994; the sequence is GDSEEEDEEDEESEFEVSDPDPSDEDVESEAGSEDDYS. The span at 995–1005 shows a compositional bias: low complexity; that stretch reads SDASGSDASGG. Over residues 1006–1018 the composition is skewed to acidic residues; that stretch reads ESEEEEEGEDWDE. Residues 1019–1033 show a composition bias toward basic and acidic residues; that stretch reads MERKAAREDKRLGAS.

The protein belongs to the peptidase M24 family. SPT16 subfamily. In terms of assembly, forms a stable heterodimer with POB3. The SPT16-POB3 dimer weakly associates with multiple molecules of NHP6 to form the FACT complex.

Its subcellular location is the nucleus. The protein resides in the chromosome. Component of the FACT complex, a general chromatin factor that acts to reorganize nucleosomes. The FACT complex is involved in multiple processes that require DNA as a template such as mRNA elongation, DNA replication and DNA repair. During transcription elongation the FACT complex acts as a histone chaperone that both destabilizes and restores nucleosomal structure. It facilitates the passage of RNA polymerase II and transcription by promoting the dissociation of one histone H2A-H2B dimer from the nucleosome, then subsequently promotes the reestablishment of the nucleosome following the passage of RNA polymerase II. The chain is FACT complex subunit SPT16 (SPT16) from Debaryomyces hansenii (strain ATCC 36239 / CBS 767 / BCRC 21394 / JCM 1990 / NBRC 0083 / IGC 2968) (Yeast).